Reading from the N-terminus, the 256-residue chain is 1-(5-phosphoribosyl)-5-[(5-phosphoribosylamino)methylideneamino] imidazole-4-carboxamide isomerase (256 aa).

The active-site Proton acceptor is the Asp-8. Residue Asp-129 is the Proton donor of the active site.

The protein belongs to the HisA/HisF family.

The protein localises to the cytoplasm. It catalyses the reaction 1-(5-phospho-beta-D-ribosyl)-5-[(5-phospho-beta-D-ribosylamino)methylideneamino]imidazole-4-carboxamide = 5-[(5-phospho-1-deoxy-D-ribulos-1-ylimino)methylamino]-1-(5-phospho-beta-D-ribosyl)imidazole-4-carboxamide. It participates in amino-acid biosynthesis; L-histidine biosynthesis; L-histidine from 5-phospho-alpha-D-ribose 1-diphosphate: step 4/9. This Prochlorococcus marinus (strain NATL2A) protein is 1-(5-phosphoribosyl)-5-[(5-phosphoribosylamino)methylideneamino] imidazole-4-carboxamide isomerase.